The following is a 222-amino-acid chain: Cytochrome b6-f complex iron-sulfur subunit, chloroplastic (222 aa).

The transit peptide at 1 to 49 (MASTALSTASNPTQLCRTRASSLCKPVKGLGFGRERIPRNITCMAGSIS) directs the protein to the chloroplast. The chain crosses the membrane as a helical span at residues 66–86 (LLGAISLPTFGMLVPYGSFLV). In terms of domain architecture, Rieske spans 109–205 (VEDWLKTHGP…ADVDDGKVVF (97 aa)). [2Fe-2S] cluster contacts are provided by Cys151, His153, Cys169, and His172. A disulfide bond links Cys156 and Cys171.

This sequence belongs to the Rieske iron-sulfur protein family. In terms of assembly, the 4 large subunits of the cytochrome b6-f complex are cytochrome b6, subunit IV (17 kDa polypeptide, petD), cytochrome f and the Rieske protein, while the 4 small subunits are petG, petL, petM and petN. The complex functions as a dimer. [2Fe-2S] cluster is required as a cofactor.

The protein localises to the plastid. Its subcellular location is the chloroplast thylakoid membrane. It catalyses the reaction 2 oxidized [plastocyanin] + a plastoquinol + 2 H(+)(in) = 2 reduced [plastocyanin] + a plastoquinone + 4 H(+)(out). In terms of biological role, component of the cytochrome b6-f complex, which mediates electron transfer between photosystem II (PSII) and photosystem I (PSI), cyclic electron flow around PSI, and state transitions. The chain is Cytochrome b6-f complex iron-sulfur subunit, chloroplastic (petC) from Triticum aestivum (Wheat).